Consider the following 433-residue polypeptide: Trigger factor (433 aa).

The PPIase FKBP-type domain occupies 163–248 (GDVVVLDFAA…VHAVKERRLP (86 aa)).

Belongs to the FKBP-type PPIase family. Tig subfamily.

The protein localises to the cytoplasm. The catalysed reaction is [protein]-peptidylproline (omega=180) = [protein]-peptidylproline (omega=0). Functionally, involved in protein export. Acts as a chaperone by maintaining the newly synthesized protein in an open conformation. Functions as a peptidyl-prolyl cis-trans isomerase. The polypeptide is Trigger factor (Nitratidesulfovibrio vulgaris (strain DP4) (Desulfovibrio vulgaris)).